We begin with the raw amino-acid sequence, 1302 residues long: Neuroglian (1302 aa).

Positions 1-23 (MWRQSTILAALLVALLCAGSAES) are cleaved as a signal peptide. Residues 24–1138 (KGNRPPRITK…ANAGWFIGMM (1115 aa)) are Extracellular-facing. Ig-like C2-type domains follow at residues 29-133 (PRIT…AELN), 134-225 (AFKD…YKIG), 245-330 (PPVR…QSFS), 339-426 (PYFT…VYLN), 432-524 (PTIS…TRIT), and 521-610 (TRIT…ANLI). Cystine bridges form between C59–C111, C155–C212, C268–C317, and C360–C410. N-linked (GlcNAc...) asparagine glycosylation is found at N182 and N198. 2 N-linked (GlcNAc...) asparagine glycosylation sites follow: N411 and N448. Fibronectin type-III domains lie at 614 to 711 (VPNA…TQPD), 716 to 813 (NPDN…SGED), 818 to 915 (APTN…TPEG), 916 to 1017 (VPSP…LKDA), and 1021 to 1119 (APAT…TVEG). Cysteines 625 and 706 form a disulfide. N-linked (GlcNAc...) asparagine glycosylation is found at N652 and N683. N-linked (GlcNAc...) asparagine glycosylation occurs at N821. N1125 carries an N-linked (GlcNAc...) asparagine glycan. A helical transmembrane segment spans residues 1139-1154 (LALAFIIILFIIICII). Over 1155–1302 (RRNRGGKYDV…AAAGAVATYV (148 aa)) the chain is Cytoplasmic. The span at 1172–1182 (GRRDYPEEGGF) shows a compositional bias: basic and acidic residues. Disordered regions lie at residues 1172–1223 (GRRD…GDTG) and 1236–1291 (VPGK…ASNG). The span at 1188 to 1203 (PLDNKSAGRQSVSSAN) shows a compositional bias: polar residues. Over residues 1253 to 1275 (AAAHQAAPTAGGSGAAGSAAAAG) the composition is skewed to low complexity.

Forms a complex with Nrx-IV/Nrx and Cont. Forms a complex composed of septate junction proteins Nrx-IV/Nrx, Tsf2/MTf, Cont and Nrg during late embryogenesis. As to expression, restricted to the surface of neurons and glia in the developing nervous system. Restricted to non-neuronal tissues.

The protein resides in the cell membrane. The protein localises to the cell junction. It localises to the septate junction. Essential for septate junctions. Septate junctions, which are the equivalent of vertebrate tight junctions, are characterized by regular arrays of transverse structures that span the intermembrane space and form a physical barrier to diffusion. Required for formation of the hemolymph-brain barrier (the insect blood-brain barrier). Vital for embryonic development. Involved in the targeting for degradation or recycling of certain septate junction components, including kune and bou/boudin, by regulating their endocytosis. In terms of biological role, may play a role in neural and glial cell adhesion in the developing embryo. Its function is as follows. May be a more general cell adhesion molecule involved in non-neuronal tissues and imaginal disk morphogenesis. This chain is Neuroglian (Nrg), found in Drosophila melanogaster (Fruit fly).